Consider the following 804-residue polypeptide: Exocyst complex component 6 (804 aa).

Belongs to the SEC15 family. The exocyst complex is composed of EXOC1, EXOC2, EXOC3, EXOC4, EXOC5, EXOC6, EXOC7 and EXOC8. Interacts with CNTRL. Interacts with RAB11A in a GTP-dependent manner.

It is found in the cytoplasm. It localises to the perinuclear region. The protein resides in the cell projection. Its subcellular location is the growth cone. The protein localises to the midbody. It is found in the midbody ring. Component of the exocyst complex involved in the docking of exocytic vesicles with fusion sites on the plasma membrane. Together with RAB11A, RAB3IP, RAB8A, PARD3, PRKCI, ANXA2, CDC42 and DNMBP promotes transcytosis of PODXL to the apical membrane initiation sites (AMIS), apical surface formation and lumenogenesis. The chain is Exocyst complex component 6 (Exoc6) from Rattus norvegicus (Rat).